The primary structure comprises 607 residues: Matrix metalloproteinase-16 (607 aa).

An N-terminal signal peptide occupies residues 1 to 31 (MILLTFSTGRRLDFVHHSGVFFLQTLLWILC). A propeptide spanning residues 32–119 (ATVCGTEQYF…SSKFHIRRKR (88 aa)) is cleaved from the precursor. N83 carries N-linked (GlcNAc...) asparagine glycosylation. Positions 99-106 (PRCGVPDQ) match the Cysteine switch motif. C101 contacts Zn(2+). Over 120–564 (YALTGQKWQH…LDNTASTVKA (445 aa)) the chain is Extracellular. A Ca(2+)-binding site is contributed by D183. The Zn(2+) site is built by H193 and D195. Ca(2+) contacts are provided by D200, G201, G203, and F205. H208 provides a ligand contact to Zn(2+). Ca(2+) is bound by residues G215, G217, and D219. Zn(2+) is bound at residue H221. Residues D223 and E226 each contribute to the Ca(2+) site. A Zn(2+)-binding site is contributed by H246. E247 is an active-site residue. H250 and H256 together coordinate Zn(2+). A disordered region spans residues 281–340 (DDLQGIQKIYGPPDKIPPPTRPLPTVPPHRSIPPADPRKNDRPKPPRPPTGRPSYPGAKP). Residues 294-315 (DKIPPPTRPLPTVPPHRSIPPA) show a composition bias toward pro residues. 4 Hemopexin repeats span residues 340–388 (PNIC…WRGL), 389–434 (PPSI…GSGI), 436–484 (PHGI…KGIP), and 485–532 (ESPQ…FMGC). The cysteines at positions 343 and 532 are disulfide-linked. A helical membrane pass occupies residues 565 to 585 (IAIVIPCILALCLLVLVYTVF). Residues 586 to 607 (QFKRKGTPRHILYCKRSMQEWV) are Cytoplasmic-facing.

It belongs to the peptidase M10A family. As to quaternary structure, interacts with CSPG4 through CSPG4 chondroitin sulfate glycosaminoglycan. It depends on Zn(2+) as a cofactor. Ca(2+) is required as a cofactor. Post-translationally, the precursor is cleaved by a furin endopeptidase. In terms of tissue distribution, expressed in heart, brain, placenta, ovary and small intestine. Isoform Short is found in the ovary.

The protein localises to the cell membrane. It is found in the secreted. Its subcellular location is the extracellular space. It localises to the extracellular matrix. The protein resides in the cell surface. Its activity is regulated as follows. TIMP-2 shows little inhibitory activity compared to TIMP-1. TIMP-1 seems to have less binding affinity than TIMP-2 for the short isoform. Functionally, endopeptidase that degrades various components of the extracellular matrix, such as collagen type III and fibronectin. Activates progelatinase A. Involved in the matrix remodeling of blood vessels. Isoform short cleaves fibronectin and also collagen type III, but at lower rate. It has no effect on type I, II, IV and V collagen. However, upon interaction with CSPG4, it may be involved in degradation and invasion of type I collagen by melanoma cells. This Homo sapiens (Human) protein is Matrix metalloproteinase-16.